A 486-amino-acid polypeptide reads, in one-letter code: F420-non-reducing hydrogenase iron-sulfur subunit A (486 aa).

The Ni(2+) site is built by Cys61 and Cys64.

It belongs to the [NiFe]/[NiFeSe] hydrogenase large subunit family. In terms of assembly, the F420-non-reducing hydrogenase is composed of three subunits; MvhA, MvhD and MvhG. It forms a complex with the heterodisulfide reductase (Hdr). Requires Ni(2+) as cofactor.

It localises to the cytoplasm. Part of a complex that provides reducing equivalents for heterodisulfide reductase. The protein is F420-non-reducing hydrogenase iron-sulfur subunit A (mvhA) of Archaeoglobus profundus (strain DSM 5631 / JCM 9629 / NBRC 100127 / Av18).